We begin with the raw amino-acid sequence, 564 residues long: Septation ring formation regulator EzrA (564 aa).

At 1 to 4 the chain is on the extracellular side; it reads MVLF. Residues 5-23 form a helical membrane-spanning segment; sequence IILAILVVILIAIGVLFYM. Residues 24–564 lie on the Cytoplasmic side of the membrane; sequence RSNKRNLIEK…KHIEEQVIKE (541 aa). Coiled coils occupy residues 84 to 126, 165 to 223, 271 to 303, and 350 to 435; these read VEEK…HQVT, EAAE…LIRE, MISR…YEVK, and VRQF…RRLL.

The protein belongs to the EzrA family.

It localises to the cell membrane. Functionally, negative regulator of FtsZ ring formation; modulates the frequency and position of FtsZ ring formation. Inhibits FtsZ ring formation at polar sites. Interacts either with FtsZ or with one of its binding partners to promote depolymerization. In Staphylococcus epidermidis (strain ATCC 35984 / DSM 28319 / BCRC 17069 / CCUG 31568 / BM 3577 / RP62A), this protein is Septation ring formation regulator EzrA.